The following is a 243-amino-acid chain: Probable transcriptional regulatory protein Bpet3099 (243 aa).

The segment at 1-21 (MAGHSKWANIQHRKGRQDAKR) is disordered.

This sequence belongs to the TACO1 family.

Its subcellular location is the cytoplasm. The polypeptide is Probable transcriptional regulatory protein Bpet3099 (Bordetella petrii (strain ATCC BAA-461 / DSM 12804 / CCUG 43448)).